A 610-amino-acid polypeptide reads, in one-letter code: UvrABC system protein C (610 aa).

The region spanning 16–94 is the GIY-YIG domain; sequence SQPGVYRMYD…IKLYQPRYNV (79 aa). In terms of domain architecture, UVR spans 204 to 239; it reads DQVLTQLISRMETASQNLEFEEAARIRDQIQAVRRV.

Belongs to the UvrC family. Interacts with UvrB in an incision complex.

It is found in the cytoplasm. Functionally, the UvrABC repair system catalyzes the recognition and processing of DNA lesions. UvrC both incises the 5' and 3' sides of the lesion. The N-terminal half is responsible for the 3' incision and the C-terminal half is responsible for the 5' incision. The sequence is that of UvrABC system protein C from Escherichia coli (strain ATCC 8739 / DSM 1576 / NBRC 3972 / NCIMB 8545 / WDCM 00012 / Crooks).